A 1226-amino-acid chain; its full sequence is Chromosome partition protein Smc (1226 aa).

ATP is bound at residue 32-39 (PNGCGKSN). Coiled-coil stretches lie at residues 173–231 (ITKF…IKRN) and 269–491 (NSLE…SKSL). The 109-residue stretch at 527-635 (YQLLGNLIQC…FDGYFIASKF (109 aa)) folds into the SMC hinge domain. Coiled-coil stretches lie at residues 679–741 (QGVV…AAKK), 775–965 (MLES…LREA), and 1006–1078 (HRRY…KSKE).

It belongs to the SMC family. In terms of assembly, homodimer.

It is found in the cytoplasm. Required for chromosome condensation and partitioning. The chain is Chromosome partition protein Smc from Halobacteriovorax marinus (strain ATCC BAA-682 / DSM 15412 / SJ) (Bacteriovorax marinus).